The sequence spans 364 residues: Uroporphyrinogen decarboxylase (364 aa).

Residues arginine 28–arginine 32, aspartate 78, tyrosine 160, threonine 215, and histidine 333 each bind substrate.

The protein belongs to the uroporphyrinogen decarboxylase family. Homodimer.

Its subcellular location is the cytoplasm. It carries out the reaction uroporphyrinogen III + 4 H(+) = coproporphyrinogen III + 4 CO2. Its pathway is porphyrin-containing compound metabolism; protoporphyrin-IX biosynthesis; coproporphyrinogen-III from 5-aminolevulinate: step 4/4. Functionally, catalyzes the decarboxylation of four acetate groups of uroporphyrinogen-III to yield coproporphyrinogen-III. The polypeptide is Uroporphyrinogen decarboxylase (Burkholderia thailandensis (strain ATCC 700388 / DSM 13276 / CCUG 48851 / CIP 106301 / E264)).